Consider the following 254-residue polypeptide: Nickel import ATP-binding protein NikD (254 aa).

Residues 2-241 (PQQIELRNIA…PKHAVTRSLV (240 aa)) form the ABC transporter domain. 36–43 (GGSGSGKS) is an ATP binding site.

This sequence belongs to the ABC transporter superfamily. Nickel importer (TC 3.A.1.5.3) family. As to quaternary structure, the complex is composed of two ATP-binding proteins (NikD and NikE), two transmembrane proteins (NikB and NikC) and a solute-binding protein (NikA).

The protein resides in the cell inner membrane. It carries out the reaction Ni(2+)(out) + ATP + H2O = Ni(2+)(in) + ADP + phosphate + H(+). Part of the ABC transporter complex NikABCDE involved in nickel import. Responsible for energy coupling to the transport system. This is Nickel import ATP-binding protein NikD from Shigella sonnei (strain Ss046).